We begin with the raw amino-acid sequence, 494 residues long: Glutamyl-tRNA(Gln) amidotransferase subunit A (494 aa).

Catalysis depends on charge relay system residues lysine 79 and serine 159. Serine 183 serves as the catalytic Acyl-ester intermediate.

The protein belongs to the amidase family. GatA subfamily. As to quaternary structure, heterotrimer of A, B and C subunits.

It carries out the reaction L-glutamyl-tRNA(Gln) + L-glutamine + ATP + H2O = L-glutaminyl-tRNA(Gln) + L-glutamate + ADP + phosphate + H(+). Allows the formation of correctly charged Gln-tRNA(Gln) through the transamidation of misacylated Glu-tRNA(Gln) in organisms which lack glutaminyl-tRNA synthetase. The reaction takes place in the presence of glutamine and ATP through an activated gamma-phospho-Glu-tRNA(Gln). In Bartonella tribocorum (strain CIP 105476 / IBS 506), this protein is Glutamyl-tRNA(Gln) amidotransferase subunit A.